The sequence spans 429 residues: GTPase Obg (429 aa).

In terms of domain architecture, Obg spans 1–158 (MFVDQVKIYV…RNVQLELKVL (158 aa)). Residues 124–145 (RGNKRFATPANPAPELSENGEP) form a disordered region. In terms of domain architecture, OBG-type G spans 159–329 (ADVGLVGFPS…LLLAIADKLE (171 aa)). GTP contacts are provided by residues 165–172 (GFPSVGKS), 190–194 (FTTIV), 212–215 (DLPG), 282–285 (NKMD), and 310–312 (SAV). Positions 172 and 192 each coordinate Mg(2+). Residues 351 to 429 (KYIAEEPDFE…LLDYEFEFMD (79 aa)) enclose the OCT domain.

It belongs to the TRAFAC class OBG-HflX-like GTPase superfamily. OBG GTPase family. In terms of assembly, monomer. Mg(2+) is required as a cofactor.

It is found in the cytoplasm. In terms of biological role, an essential GTPase which binds GTP, GDP and possibly (p)ppGpp with moderate affinity, with high nucleotide exchange rates and a fairly low GTP hydrolysis rate. Plays a role in control of the cell cycle, stress response, ribosome biogenesis and in those bacteria that undergo differentiation, in morphogenesis control. The protein is GTPase Obg of Listeria welshimeri serovar 6b (strain ATCC 35897 / DSM 20650 / CCUG 15529 / CIP 8149 / NCTC 11857 / SLCC 5334 / V8).